A 645-amino-acid chain; its full sequence is uncharacterized protein (645 aa).

The N-terminal stretch at 1-23 is a signal peptide; that stretch reads MPSSHRLSATILIFLSLTYISSS. 2 disordered regions span residues 30–58 and 92–129; these read ITDKQDSSEDDDHLQTFPTPPPIGTTTAS and NSNANPYFSTTRKPKNRSDSSQKARDPDPQNQVIAGIP. Residues 92–102 are compositionally biased toward polar residues; sequence NSNANPYFSTT. The N-linked (GlcNAc...) asparagine glycan is linked to Asn107. A compositionally biased stretch (basic and acidic residues) spans 107-119; sequence NRSDSSQKARDPD. In terms of domain architecture, PAN 1 spans 135-214; it reads CFRRYENSII…QTRDYFEPTD (80 aa). Disulfide bonds link Cys161-Cys187 and Cys165-Cys175. Residues 225–247 are disordered; it reads ESSSSAPSSEDEDSPPSPPPSAP. PAN domains lie at 281-369 and 378-465; these read CPRG…EKIC and CPST…EVEC. Cystine bridges form between Cys281/Cys369, Cys313/Cys341, Cys317/Cys329, Cys378/Cys465, Cys407/Cys436, and Cys411/Cys422. N-linked (GlcNAc...) asparagine glycosylation is present at Asn421. Positions 556-567 are enriched in basic and acidic residues; sequence AGELENNDHEQI. Positions 556–582 are disordered; sequence AGELENNDHEQIEDNNTDASEDPVPTK. Asn570 carries an N-linked (GlcNAc...) asparagine glycan.

This is an uncharacterized protein from Caenorhabditis elegans.